Here is a 158-residue protein sequence, read N- to C-terminus: U4/U6.U5 small nuclear ribonucleoprotein 27 kDa protein (158 aa).

The tract at residues 1-102 (MGRSRSRSPE…AEDLEGKTEE (102 aa)) is disordered. Positions 13–59 (RERRRSRSASRERERRRRERSRSRERRRSRSRSPHRRRSRSPRRHRS) are enriched in basic residues. Residues 66–101 (RLKDRRDDDKKEPKESKGGGSKERQLAAEDLEGKTE) show a composition bias toward basic and acidic residues.

It belongs to the SNUT3 family. As to quaternary structure, part of a tri-snRNP complex.

It is found in the nucleus. Functionally, may play a role in mRNA splicing. The sequence is that of U4/U6.U5 small nuclear ribonucleoprotein 27 kDa protein (snrnp27) from Xenopus laevis (African clawed frog).